A 133-amino-acid chain; its full sequence is MAKEFGRPQRVAQEMQKEIAIILQREIKDPRLGMMTTVSGVEMSRDLAYAKVYVTFLNDKDEAAVKAGIKALQEASGFIRSLLGKAMRLRIVPELTFFYDNSLVEGMRMSNLVTSVVKHDDERRVNPDDSKED.

It belongs to the RbfA family. In terms of assembly, monomer. Binds 30S ribosomal subunits, but not 50S ribosomal subunits or 70S ribosomes.

The protein localises to the cytoplasm. Functionally, one of several proteins that assist in the late maturation steps of the functional core of the 30S ribosomal subunit. Associates with free 30S ribosomal subunits (but not with 30S subunits that are part of 70S ribosomes or polysomes). Required for efficient processing of 16S rRNA. May interact with the 5'-terminal helix region of 16S rRNA. In Klebsiella pneumoniae (strain 342), this protein is Ribosome-binding factor A.